Here is a 99-residue protein sequence, read N- to C-terminus: HTH-type transcriptional regulator YgaV (99 aa).

The HTH arsR-type domain occupies Leu7–Pro99. Residues Ala41–Asp64 constitute a DNA-binding region (H-T-H motif).

Its activity is regulated as follows. In the presence of H(2)S, two cysteine residues form an intramolecular tetrasulfide bond, which attenuates the binding of YgaV to DNA. Both unmodified YgaV and sulfide-modified YgaV can probably function as either a repressor or an activator. Binds heme, which may influence the DNA-binding affinity. Its function is as follows. Transcriptional regulator that regulates large-scale gene expression in response to sulfide. May act as a global regulator responsible for redox homeostasis. It functions as both a repressor and an activator. In the absence of sulfide compounds, it negatively regulates many anaerobic respiratory genes, including formate, fumarate, lactate, nitrate and nitrite reductase genes. In the presence of hydrogen sulfide (H(2)S), YgaV activity is attenuated, leading to the expression of anaerobic respiratory and ROS scavenging genes, which contributes to redox homeostasis, reactive oxygen species (ROS) scavenging and antibiotic tolerance. It responds to H(2)O(2) scavenging and increases antibiotic tolerance under H(2)S-atmospheric conditions. It also negatively regulates its own expression by binding to the ygaVP promoter region. May also be involved in regulatory mechanisms that operate independently of sulfide. The sequence is that of HTH-type transcriptional regulator YgaV (ygaV) from Escherichia coli (strain K12).